Here is a 58-residue protein sequence, read N- to C-terminus: Cyclotide trypsin inhibitor TopI1 (58 aa).

Residues 1–23 (MKFIIVLLLLTALTLTSIPVIEG) form the signal peptide. Positions 24-55 (ILKRCKTYDDCKDVCKARKGKCEFGICKCMIK) form a cross-link, cyclopeptide (Ile-Lys). Cystine bridges form between Cys-28/Cys-45, Cys-34/Cys-50, and Cys-38/Cys-52. Serine amide is present on Ser-56.

This is a cyclic peptide. Expressed by the venom gland.

Its subcellular location is the secreted. Its function is as follows. First cyclic scorpion trypsin inhibitor (Kd~0.5 nM). Does not inhibit chymotrypsin. The protein is Cyclotide trypsin inhibitor TopI1 of Tityus obscurus (Amazonian scorpion).